Consider the following 180-residue polypeptide: Beta-lactoglobulin-1 (180 aa).

An N-terminal signal peptide occupies residues 1-18 (MKCLLLALGLALMCGIQA). Cystine bridges form between cysteine 84–cysteine 178 and cysteine 124–cysteine 137.

This sequence belongs to the calycin superfamily. Lipocalin family. In terms of assembly, monomer.

The protein localises to the secreted. Its function is as follows. Lactoglobulin is the primary component of whey, it binds retinol and is probably involved in the transport of that molecule. The chain is Beta-lactoglobulin-1 (LGB1) from Equus caballus (Horse).